Here is a 516-residue protein sequence, read N- to C-terminus: GMP synthase [glutamine-hydrolyzing] (516 aa).

Positions Lys8–Leu198 constitute a Glutamine amidotransferase type-1 domain. The active-site Nucleophile is the Cys84. Active-site residues include His172 and Glu174. In terms of domain architecture, GMPS ATP-PPase spans Trp199–Arg391. Ser226 to Ser232 provides a ligand contact to ATP.

As to quaternary structure, homodimer.

It catalyses the reaction XMP + L-glutamine + ATP + H2O = GMP + L-glutamate + AMP + diphosphate + 2 H(+). It functions in the pathway purine metabolism; GMP biosynthesis; GMP from XMP (L-Gln route): step 1/1. Catalyzes the synthesis of GMP from XMP. The polypeptide is GMP synthase [glutamine-hydrolyzing] (Francisella tularensis subsp. novicida (strain U112)).